Consider the following 305-residue polypeptide: Peroxisome biogenesis factor 2 (305 aa).

Residues Met1–Leu15 lie on the Peroxisomal matrix side of the membrane. Residues Arg16–His42 traverse the membrane as a helical segment. The Cytoplasmic portion of the chain corresponds to Gly43–Leu48. A helical transmembrane segment spans residues Leu49–Ala74. Topologically, residues Thr75 to Pro98 are peroxisomal matrix. A helical membrane pass occupies residues Ser99–Arg125. Residues Asn126 to Gly133 are Cytoplasmic-facing. The chain crosses the membrane as a helical span at residues Lys134–Lys160. The Peroxisomal matrix portion of the chain corresponds to Gly161 to Gly187. A helical transmembrane segment spans residues Phe188–Ile211. Topologically, residues Asn212–Leu305 are cytoplasmic. Zn(2+) contacts are provided by Cys244, Cys247, Cys259, His261, Cys264, Cys267, Cys280, and Cys283. Residues Cys244–Gly284 form an RING-type zinc finger.

This sequence belongs to the pex2/pex10/pex12 family. Component of the PEX2-PEX10-PEX12 retrotranslocation channel, composed of PEX2, PEX10 and PEX12. In terms of processing, forms intramolecular and intermolecular disulfide bonds in response to reactive oxygen species (ROS), promoting higher stability.

It localises to the peroxisome membrane. The enzyme catalyses [E2 ubiquitin-conjugating enzyme]-S-ubiquitinyl-L-cysteine + [acceptor protein]-L-cysteine = [E2 ubiquitin-conjugating enzyme]-L-cysteine + [acceptor protein]-S-ubiquitinyl-L-cysteine.. It catalyses the reaction S-ubiquitinyl-[E2 ubiquitin-conjugating enzyme]-L-cysteine + [acceptor protein]-L-lysine = [E2 ubiquitin-conjugating enzyme]-L-cysteine + N(6)-ubiquitinyl-[acceptor protein]-L-lysine.. Its pathway is protein modification; protein ubiquitination. In terms of biological role, E3 ubiquitin-protein ligase component of a retrotranslocation channel required for peroxisome organization by mediating export of the PEX5 receptor from peroxisomes to the cytosol, thereby promoting PEX5 recycling. The retrotranslocation channel is composed of PEX2, PEX10 and PEX12; each subunit contributing transmembrane segments that coassemble into an open channel that specifically allows the passage of PEX5 through the peroxisomal membrane. PEX2 also regulates peroxisome organization by acting as a E3 ubiquitin-protein ligase. PEX2 ubiquitinates PEX5 during its passage through the retrotranslocation channel: catalyzes monoubiquitination of PEX5 at 'Cys-11', a modification that acts as a signal for PEX5 extraction into the cytosol. Required for pexophagy in response to starvation by mediating ubiquitination of peroxisomal proteins, such as PEX5 and ABCD3/PMP70. Also involved in the response to reactive oxygen species (ROS) by mediating 'Lys-48'-linked polyubiquitination and subsequent degradation of PNPLA2/ATGL, thereby regulating lipolysis. This Rattus norvegicus (Rat) protein is Peroxisome biogenesis factor 2 (Pex2).